We begin with the raw amino-acid sequence, 121 residues long: Holin-like protein CidA 1 (121 aa).

The next 4 membrane-spanning stretches (helical) occupy residues 7-24 (SGQI…EWIA), 28-50 (HLPV…FNLV), 62-81 (LLKE…IRYR), and 91-113 (LILI…TELL).

The protein belongs to the CidA/LrgA family. CidA subfamily.

It localises to the cell membrane. In terms of biological role, increases the activity of extracellular murein hydrolases possibly by mediating their export via hole formation. Inhibited by the antiholin-like proteins LrgAB. In an unstressed cell, the LrgAB products probably inhibit the function of the CidA protein. When a cell is stressed by the addition of antibiotics or by other factors in the environment, CidA possibly oligomerizes within the bacterial cell membrane, creating lesions that disrupt the proton motive force, which in turn results in loss of cell viability. These lesions are also hypothesized to regulate the subsequent cell lysis by either allowing the murein hydrolases access to the cell wall substrate and/or regulating their activity by a possible change in the cell wall pH that results from loss of membrane potential. The protein is Holin-like protein CidA 1 (cidA1) of Bacillus cereus (strain ATCC 14579 / DSM 31 / CCUG 7414 / JCM 2152 / NBRC 15305 / NCIMB 9373 / NCTC 2599 / NRRL B-3711).